We begin with the raw amino-acid sequence, 678 residues long: UvrABC system protein C (678 aa).

Residues 1–13 (MKKNISYGKHKTF) show a composition bias toward basic residues. The interval 1 to 25 (MKKNISYGKHKTFPSKLNGLEKQHS) is disordered. Residues 69–147 (HKPGVYRMFD…IKRLHPRFNV (79 aa)) enclose the GIY-YIG domain. A UVR domain is found at 257 to 292 (QSVKNDMIQAMHKAAEDLDFEQAAVYRDRLSALSHI).

This sequence belongs to the UvrC family. In terms of assembly, interacts with UvrB in an incision complex.

Its subcellular location is the cytoplasm. Its function is as follows. The UvrABC repair system catalyzes the recognition and processing of DNA lesions. UvrC both incises the 5' and 3' sides of the lesion. The N-terminal half is responsible for the 3' incision and the C-terminal half is responsible for the 5' incision. In Bartonella quintana (strain Toulouse) (Rochalimaea quintana), this protein is UvrABC system protein C.